We begin with the raw amino-acid sequence, 251 residues long: Insertion sequence IS5376 putative ATP-binding protein (251 aa).

Residue 105-112 (GPPGIGKT) participates in ATP binding.

This sequence belongs to the IS21/IS1162 putative ATP-binding protein family.

In Geobacillus stearothermophilus (Bacillus stearothermophilus), this protein is Insertion sequence IS5376 putative ATP-binding protein.